Reading from the N-terminus, the 500-residue chain is MSFVLAIDQGTTSSRAIVFRSDISIAAVAQQEFPQHFPASGWVEHEPEDIWTSTVMTCRDALDKAGIKAKDIAAIGITNQRETTVVWDRATGQAVHRAIVWQDRRTADICAKLKADGYEPDVSAKTGLIIDPYFSGTKVAWILDHVPGARERAERGELLFGTVDCYLLWRLTGGRVHATDATNASRTLLFNIHTGQWDDTLLKLLRVPRSMLPEVKDSSAEFGTTTPDLFGGPIKVSGIAGDQQAATIGQACFTPGMMKSTYGTGCFALLNTGATPVKSNNKLLTTIAYQLGGVRTYALEGSIFVAGSAVQWLRDGLGIIKHAAETGPLADKSDSMQSVYLVPAFVGLGAPYWNPRVRGALFGLTRNTGPAELAHATLESVCYQTYDLWAAMRADWPDASAATIVLRVDGGMTASDWTMQRLADLLDAPVDRPMIQETTALGAAYLAGLNAGVYPEPEKFADNWRLEHRFKPAMSAATRQRKLAGWARAVKGVLASDEGE.

T11 lines the ADP pocket. ATP contacts are provided by T11, T12, and S13. T11 lines the sn-glycerol 3-phosphate pocket. R15 is an ADP binding site. Sn-glycerol 3-phosphate is bound by residues R81, E82, Y133, and D242. Residues R81, E82, Y133, D242, and Q243 each coordinate glycerol. The ADP site is built by T264 and G307. The ATP site is built by T264, G307, Q311, and G411. An ADP-binding site is contributed by G411.

Belongs to the FGGY kinase family.

The enzyme catalyses glycerol + ATP = sn-glycerol 3-phosphate + ADP + H(+). It functions in the pathway polyol metabolism; glycerol degradation via glycerol kinase pathway; sn-glycerol 3-phosphate from glycerol: step 1/1. Inhibited by fructose 1,6-bisphosphate (FBP). In terms of biological role, key enzyme in the regulation of glycerol uptake and metabolism. Catalyzes the phosphorylation of glycerol to yield sn-glycerol 3-phosphate. This is Glycerol kinase from Bradyrhizobium sp. (strain BTAi1 / ATCC BAA-1182).